The primary structure comprises 814 residues: Putative E3 ubiquitin-protein ligase RF298 (814 aa).

Disordered regions lie at residues 1–51 (MVEK…ASLT), 221–301 (SVSN…TKSA), and 411–441 (ALPA…STKP). Residues 221 to 231 (SVSNASKSSES) show a composition bias toward low complexity. Polar residues predominate over residues 289 to 301 (SVSTASGEGTKSA). Over residues 423 to 435 (SEKKSGSEPEEKP) the composition is skewed to basic and acidic residues. Positions 506-710 (ELKALRKEKE…KLKSDSLKIA (205 aa)) form a coiled coil. Residues 760–800 (CVMCLSEEMSVIFLPCAHQVLCSKCNQLHEKEAMEDCPSCR) form an RING-type zinc finger.

Belongs to the RING-type zinc finger family.

It carries out the reaction S-ubiquitinyl-[E2 ubiquitin-conjugating enzyme]-L-cysteine + [acceptor protein]-L-lysine = [E2 ubiquitin-conjugating enzyme]-L-cysteine + N(6)-ubiquitinyl-[acceptor protein]-L-lysine.. It participates in protein modification; protein ubiquitination. The chain is Putative E3 ubiquitin-protein ligase RF298 (RF298) from Arabidopsis thaliana (Mouse-ear cress).